The following is a 96-amino-acid chain: Protein Vpr (96 aa).

The interval 1-42 (MEQAPEDQGPQREPYNQWALELLEELKNEAVRHFPRIWLHGL) is homooligomerization. 3 positions are modified to phosphoserine; by host: Ser-79, Ser-94, and Ser-96.

The protein belongs to the HIV-1 VPR protein family. As to quaternary structure, homooligomer, may form homodimer. Interacts with p6-gag region of the Pr55 Gag precursor protein through a (Leu-X-X)4 motif near the C-terminus of the P6gag protein. Interacts with host UNG. May interact with host RAD23A/HHR23A. Interacts with host VPRBP/DCAF1, leading to hijack the CUL4A-RBX1-DDB1-DCAF1/VPRBP complex, mediating ubiquitination of host proteins such as TERT and ZGPAT and arrest of the cell cycle in G2 phase. Phosphorylated on several residues by host. These phosphorylations regulate VPR activity for the nuclear import of the HIV-1 pre-integration complex.

The protein resides in the virion. It is found in the host nucleus. Its subcellular location is the host extracellular space. During virus replication, may deplete host UNG protein, and incude G2-M cell cycle arrest. Acts by targeting specific host proteins for degradation by the 26S proteasome, through association with the cellular CUL4A-DDB1 E3 ligase complex by direct interaction with host VPRPB/DCAF-1. Cell cycle arrest reportedly occurs within hours of infection and is not blocked by antiviral agents, suggesting that it is initiated by the VPR carried into the virion. Additionally, VPR induces apoptosis in a cell cycle dependent manner suggesting that these two effects are mechanistically linked. Detected in the serum and cerebrospinal fluid of AIDS patient, VPR may also induce cell death to bystander cells. In terms of biological role, during virus entry, plays a role in the transport of the viral pre-integration (PIC) complex to the host nucleus. This function is crucial for viral infection of non-dividing macrophages. May act directly at the nuclear pore complex, by binding nucleoporins phenylalanine-glycine (FG)-repeat regions. This is Protein Vpr from Human immunodeficiency virus type 1 group M subtype B (isolate MN) (HIV-1).